The following is a 93-amino-acid chain: Protein Tat (93 aa).

An interaction with human CREBBP region spans residues 1–24 (MEPVDPELEPWNHPGSQPKTACNN). Residues 1–48 (MEPVDPELEPWNHPGSQPKTACNNCHCKVCCYHCVYCFTKKGLGISYG) are transactivation. The Zn(2+) site is built by cysteine 22, cysteine 25, and cysteine 27. The segment at 22-37 (CNNCHCKVCCYHCVYC) is cysteine-rich. Lysine 28 carries the post-translational modification N6-acetyllysine; by host PCAF. Zn(2+)-binding residues include cysteine 30, histidine 33, cysteine 34, and cysteine 37. The tract at residues 38–48 (FTKKGLGISYG) is core. Residues 48 to 58 (GRKKRSQRRRT) are compositionally biased toward basic residues. Positions 48-93 (GRKKRSQRRRTPQSNKSHQDPLPKQPLSQRLGDQTGQKEQKKTLES) are disordered. The Nuclear localization signal, RNA-binding (TAR), and protein transduction motif lies at 49-57 (RKKRSQRRR). The interval 49-86 (RKKRSQRRRTPQSNKSHQDPLPKQPLSQRLGDQTGQKE) is interaction with the host capping enzyme RNGTT. Residues lysine 50 and lysine 51 each carry the N6-acetyllysine; by host EP300 and GCN5L2 modification. At arginine 52 the chain carries Asymmetric dimethylarginine; by host PRMT6. Lysine 71 participates in a covalent cross-link: Glycyl lysine isopeptide (Lys-Gly) (interchain with G-Cter in ubiquitin). The segment covering 73-82 (PLSQRLGDQT) has biased composition (polar residues). Basic and acidic residues predominate over residues 83 to 93 (GQKEQKKTLES).

This sequence belongs to the lentiviruses Tat family. As to quaternary structure, interacts with host CCNT1. Associates with the P-TEFb complex composed at least of Tat, P-TEFb (CDK9 and CCNT1), TAR RNA, RNA Pol II. Recruits the HATs CREBBP, TAF1/TFIID, EP300, PCAF and GCN5L2. Interacts with host KAT5/Tip60; this interaction targets the latter to degradation. Interacts with the host deacetylase SIRT1. Interacts with host capping enzyme RNGTT; this interaction stimulates RNGTT. Binds to host KDR, and to the host integrins ITGAV/ITGB3 and ITGA5/ITGB1. Interacts with host KPNB1/importin beta-1 without previous binding to KPNA1/importin alpha-1. Interacts with EIF2AK2. Interacts with host nucleosome assembly protein NAP1L1; this interaction may be required for the transport of Tat within the nucleus, since the two proteins interact at the nuclear rim. Interacts with host C1QBP/SF2P32; this interaction involves lysine-acetylated Tat. Interacts with the host chemokine receptors CCR2, CCR3 and CXCR4. Interacts with host DPP4/CD26; this interaction may trigger an anti-proliferative effect. Interacts with host LDLR. Interacts with the host extracellular matrix metalloproteinase MMP1. Interacts with host PRMT6; this interaction mediates Tat's methylation. Interacts with, and is ubiquitinated by MDM2/Hdm2. Interacts with host PSMC3 and HTATIP2. Interacts with STAB1; this interaction may overcome SATB1-mediated repression of IL2 and IL2RA (interleukin) in T cells by binding to the same domain than HDAC1. Interacts (when acetylated) with human CDK13, thereby increasing HIV-1 mRNA splicing and promoting the production of the doubly spliced HIV-1 protein Nef. Interacts with host TBP; this interaction modulates the activity of transcriptional pre-initiation complex. Interacts with host RELA. In terms of processing, asymmetrical arginine methylation by host PRMT6 seems to diminish the transactivation capacity of Tat and affects the interaction with host CCNT1. Post-translationally, acetylation by EP300, CREBBP, GCN5L2/GCN5 and PCAF regulates the transactivation activity of Tat. EP300-mediated acetylation of Lys-50 promotes dissociation of Tat from the TAR RNA through the competitive binding to PCAF's bromodomain. In addition, the non-acetylated Tat's N-terminus can also interact with PCAF. PCAF-mediated acetylation of Lys-28 enhances Tat's binding to CCNT1. Lys-50 is deacetylated by SIRT1. Polyubiquitination by host MDM2 does not target Tat to degradation, but activates its transactivation function and fosters interaction with CCNT1 and TAR RNA. In terms of processing, phosphorylated by EIF2AK2 on serine and threonine residues adjacent to the basic region important for TAR RNA binding and function. Phosphorylation of Tat by EIF2AK2 is dependent on the prior activation of EIF2AK2 by dsRNA.

It localises to the host nucleus. The protein resides in the host nucleolus. The protein localises to the host cytoplasm. Its subcellular location is the secreted. Its function is as follows. Transcriptional activator that increases RNA Pol II processivity, thereby increasing the level of full-length viral transcripts. Recognizes a hairpin structure at the 5'-LTR of the nascent viral mRNAs referred to as the transactivation responsive RNA element (TAR) and recruits the cyclin T1-CDK9 complex (P-TEFb complex) that will in turn hyperphosphorylate the RNA polymerase II to allow efficient elongation. The CDK9 component of P-TEFb and other Tat-activated kinases hyperphosphorylate the C-terminus of RNA Pol II that becomes stabilized and much more processive. Other factors such as HTATSF1/Tat-SF1, SUPT5H/SPT5, and HTATIP2 are also important for Tat's function. Besides its effect on RNA Pol II processivity, Tat induces chromatin remodeling of proviral genes by recruiting the histone acetyltransferases (HATs) CREBBP, EP300 and PCAF to the chromatin. This also contributes to the increase in proviral transcription rate, especially when the provirus integrates in transcriptionally silent region of the host genome. To ensure maximal activation of the LTR, Tat mediates nuclear translocation of NF-kappa-B by interacting with host RELA. Through its interaction with host TBP, Tat may also modulate transcription initiation. Tat can reactivate a latently infected cell by penetrating in it and transactivating its LTR promoter. In the cytoplasm, Tat is thought to act as a translational activator of HIV-1 mRNAs. In terms of biological role, extracellular circulating Tat can be endocytosed by surrounding uninfected cells via the binding to several surface receptors such as CD26, CXCR4, heparan sulfate proteoglycans (HSPG) or LDLR. Neurons are rarely infected, but they internalize Tat via their LDLR. Through its interaction with nuclear HATs, Tat is potentially able to control the acetylation-dependent cellular gene expression. Modulates the expression of many cellular genes involved in cell survival, proliferation or in coding for cytokines or cytokine receptors. Tat plays a role in T-cell and neurons apoptosis. Tat induced neurotoxicity and apoptosis probably contribute to neuroAIDS. Circulating Tat also acts as a chemokine-like and/or growth factor-like molecule that binds to specific receptors on the surface of the cells, affecting many cellular pathways. In the vascular system, Tat binds to ITGAV/ITGB3 and ITGA5/ITGB1 integrins dimers at the surface of endothelial cells and competes with bFGF for heparin-binding sites, leading to an excess of soluble bFGF. The chain is Protein Tat from Pan troglodytes (Chimpanzee).